A 122-amino-acid polypeptide reads, in one-letter code: Small ribosomal subunit protein uS13 (122 aa).

The disordered stretch occupies residues 95-122 (GLPVRGQRTHTNARTRKGPAKSIAGKKK).

The protein belongs to the universal ribosomal protein uS13 family. In terms of assembly, part of the 30S ribosomal subunit. Forms a loose heterodimer with protein S19. Forms two bridges to the 50S subunit in the 70S ribosome.

Its function is as follows. Located at the top of the head of the 30S subunit, it contacts several helices of the 16S rRNA. In the 70S ribosome it contacts the 23S rRNA (bridge B1a) and protein L5 of the 50S subunit (bridge B1b), connecting the 2 subunits; these bridges are implicated in subunit movement. Contacts the tRNAs in the A and P-sites. The protein is Small ribosomal subunit protein uS13 of Rhodopseudomonas palustris (strain BisB18).